Consider the following 152-residue polypeptide: Ribosome maturation factor RimP (152 aa).

The protein belongs to the RimP family.

It localises to the cytoplasm. Its function is as follows. Required for maturation of 30S ribosomal subunits. This chain is Ribosome maturation factor RimP, found in Citrobacter koseri (strain ATCC BAA-895 / CDC 4225-83 / SGSC4696).